Reading from the N-terminus, the 126-residue chain is Holo-[acyl-carrier-protein] synthase (126 aa).

Positions 9 and 58 each coordinate Mg(2+).

It belongs to the P-Pant transferase superfamily. AcpS family. It depends on Mg(2+) as a cofactor.

Its subcellular location is the cytoplasm. The catalysed reaction is apo-[ACP] + CoA = holo-[ACP] + adenosine 3',5'-bisphosphate + H(+). Its function is as follows. Transfers the 4'-phosphopantetheine moiety from coenzyme A to a Ser of acyl-carrier-protein. In Yersinia enterocolitica serotype O:8 / biotype 1B (strain NCTC 13174 / 8081), this protein is Holo-[acyl-carrier-protein] synthase.